Reading from the N-terminus, the 538-residue chain is MFS-type transporter tndD (538 aa).

Residues 1–42 form a disordered region; that stretch reads MSLSGSDSHLAVSPTLAEDMNSSDTSAGLAETPPADEEKRSI. N-linked (GlcNAc...) asparagine glycosylation is found at Asn21 and Asn71. 11 helical membrane passes run 81–101, 115–135, 153–173, 203–223, 235–255, 309–329, 348–368, 394–414, 422–442, 444–464, and 485–505; these read VGIV…FAPG, LLAG…PLIL, ICFT…MLIA, GGVI…GPVA, WVFW…FLFL, PIVA…YLMF, GLTF…IGAV, LPPL…YGWS, IVPI…FMCI, SYLV…NTVV, and LGWG…IPWA.

Belongs to the major facilitator superfamily.

Its subcellular location is the membrane. In terms of biological role, MFS-type transporter; part of the gene cluster that mediates the biosynthesis of talaronoid C, a fusicoccane diterpenoid with an unprecedented tricyclic 5/8/6 ring system. This is MFS-type transporter tndD from Aspergillus flavipes.